Consider the following 609-residue polypeptide: Pogo transposable element with KRAB domain (609 aa).

Disordered stretches follow at residues 1-28 (MESTAYPLNLSLKEEEEEEEIQSRELED) and 100-127 (EGEEESQNSDEWQLQGGTSAENEESDVK). Residues 8–28 (LNLSLKEEEEEEEIQSRELED) adopt a coiled-coil conformation. Lys13 is covalently cross-linked (Glycyl lysine isopeptide (Lys-Gly) (interchain with G-Cter in SUMO2)). A KRAB domain is found at 47 to 118 (ALFDEVAIYF…DEWQLQGGTS (72 aa)). The segment covering 108-119 (SDEWQLQGGTSA) has biased composition (polar residues). An HTH CENPB-type domain is found at 250–323 (AFRGPKNGRF…MRRYDLSLRH (74 aa)). In terms of domain architecture, DDE-1 spans 353 to 567 (HDYEVAQMGN…ISSESIVQGF (215 aa)). Residue Lys384 forms a Glycyl lysine isopeptide (Lys-Gly) (interchain with G-Cter in SUMO2) linkage. A disordered region spans residues 588-609 (SELPGGGEPPKDCDTESMAESN).

It is found in the nucleus. The chain is Pogo transposable element with KRAB domain (POGK) from Homo sapiens (Human).